Reading from the N-terminus, the 85-residue chain is Conotoxin Lt28.2 (85 aa).

The N-terminal stretch at 1 to 21 (MPKLEMMLLVLLILPLCYIDA) is a signal peptide. The propeptide occupies 22 to 40 (VGPPPPWNMEDEIIEHWQK).

This sequence belongs to the conotoxin D superfamily. Post-translationally, contains 5 disulfide bonds. Expressed by the venom duct.

It localises to the secreted. Its function is as follows. Probable neurotoxin. This chain is Conotoxin Lt28.2, found in Conus litteratus (Lettered cone).